Reading from the N-terminus, the 482-residue chain is DNA polymerase II small subunit (482 aa).

This sequence belongs to the DNA polymerase delta/II small subunit family. As to quaternary structure, heterodimer of a large subunit and a small subunit.

It catalyses the reaction DNA(n) + a 2'-deoxyribonucleoside 5'-triphosphate = DNA(n+1) + diphosphate. The enzyme catalyses Exonucleolytic cleavage in the 3'- to 5'-direction to yield nucleoside 5'-phosphates.. Its function is as follows. Possesses two activities: a DNA synthesis (polymerase) and an exonucleolytic activity that degrades single-stranded DNA in the 3' to 5' direction. Has a template-primer preference which is characteristic of a replicative DNA polymerase. This is DNA polymerase II small subunit (polB) from Methanothermobacter thermautotrophicus (strain ATCC 29096 / DSM 1053 / JCM 10044 / NBRC 100330 / Delta H) (Methanobacterium thermoautotrophicum).